The chain runs to 613 residues: MSEPAAEVPEPMEDCGQDASAVPSSAAPLCQKEEAGPGPAAGPGTQPGLYSYIRDDLFTSEIFKLELQNVPRHASFSDVRRFLGRFGLQSHKIKLFGQPPCAFVTFRSAAERDKALRVLHGALWKGCPLSVRLARPKADPMARKRRQEGDSEPSVTQIADVVTPLWTVPYTEQLEQKRLECERVLQKLAKEIGNTNRALLPWLLLQRQQHNKACCPLEGVKPSPQQTEYRNKCEFLVGVGVDGKDNTVGCRLGKYKGGTCAVAAPFDTVHIPEATKQVVKAFQEFIRSTPYSAYDPETYTGHWKQLTVRTSSRGQAMAIAYFHPQKLSSEEVAGLKASLVCHFMEGPGKASGVTSLYFVEEGQRKTPSQEGLPLEHMAGDQCIQEDLLGLTFRISPHAFFQVNTPAAEVLYTVIQEWAQLDGGSTVLDVCCGTGTIGLALAPKVKRVVGIELCQEAVEDARMNALTNELSNVEFHCGRAEDLVPGLVSRLSSHQLVAVLDPPRAGLHSKVILAIRKAENIKRLLYVSCNPRAAMGNFVDLCRAPSNRVKGTPFHPVKAVAVDLFPQTPHCEMLILFERMQQHPNGIEALEHQEFQTPRNLPDITPQETEISLS.

A disordered region spans residues 1 to 46; sequence MSEPAAEVPEPMEDCGQDASAVPSSAAPLCQKEEAGPGPAAGPGTQ. One can recognise an RRM domain in the interval 63–136; the sequence is FKLELQNVPR…CPLSVRLARP (74 aa). The stretch at 170 to 200 forms a coiled coil; it reads YTEQLEQKRLECERVLQKLAKEIGNTNRALL. Residue S368 is modified to Phosphoserine. S-adenosyl-L-methionine is bound by residues Q401, E451, and D500. The Nucleophile role is filled by C528. The active-site Proton acceptor is the E571.

The protein belongs to the class I-like SAM-binding methyltransferase superfamily. RNA M5U methyltransferase family. In terms of tissue distribution, widely expressed at low level. Expressed at higher level in proliferating cells.

It localises to the cytoplasm. The protein resides in the cytosol. The enzyme catalyses uridine(54) in tRNA + S-adenosyl-L-methionine = 5-methyluridine(54) in tRNA + S-adenosyl-L-homocysteine + H(+). The catalysed reaction is a uridine in mRNA + S-adenosyl-L-methionine = a 5-methyluridine in mRNA + S-adenosyl-L-homocysteine + H(+). In terms of biological role, S-adenosyl-L-methionine-dependent methyltransferase that catalyzes the formation of 5-methyl-uridine in tRNAs and some mRNAs. Mainly catalyzes the methylation of uridine at position 54 (m5U54) in cytosolic tRNAs. Also able to mediate the formation of 5-methyl-uridine in some mRNAs. This chain is tRNA (uracil-5-)-methyltransferase homolog A, found in Mus musculus (Mouse).